Consider the following 410-residue polypeptide: Histidine--tRNA ligase (410 aa).

This sequence belongs to the class-II aminoacyl-tRNA synthetase family.

The protein resides in the cytoplasm. The enzyme catalyses tRNA(His) + L-histidine + ATP = L-histidyl-tRNA(His) + AMP + diphosphate + H(+). In Methanocorpusculum labreanum (strain ATCC 43576 / DSM 4855 / Z), this protein is Histidine--tRNA ligase.